The primary structure comprises 462 residues: Arginine-specific demethylase JMJ20 (462 aa).

A JmjC domain is found at 115–287 (VKEYPDYTAY…WVWDLLWKDY (173 aa)). Fe cation contacts are provided by His177, Asp179, and His255.

This sequence belongs to the JARID1 histone demethylase family. Fe(2+) is required as a cofactor. As to expression, mostly expressed in leaves, and, to a lower extent, in inflorescences, roots, siliques and stems.

The protein resides in the nucleus. It catalyses the reaction N(omega),N(omega)-dimethyl-L-arginyl-[protein] + 2-oxoglutarate + O2 = N(omega)-methyl-L-arginyl-[protein] + formaldehyde + succinate + CO2. Its function is as follows. Histone demethylase that demethylates 'Arg-3' (H4R3me) of histone H4 with a specific activity for H4R3me2. Involved in the positive regulation of gene expression. Together with JMJ22, positively regulates seed germination by promoting the removal of repressive histone arginine methylations (e.g. H4R3me2) at GA3ox1 and GA3ox2 to trigger gibberellic acid (GA) biosynthesis. This Arabidopsis thaliana (Mouse-ear cress) protein is Arginine-specific demethylase JMJ20.